Consider the following 488-residue polypeptide: UDP-N-acetylmuramate--L-alanine ligase (488 aa).

127–133 (GTHGKTT) lines the ATP pocket.

The protein belongs to the MurCDEF family.

It localises to the cytoplasm. The enzyme catalyses UDP-N-acetyl-alpha-D-muramate + L-alanine + ATP = UDP-N-acetyl-alpha-D-muramoyl-L-alanine + ADP + phosphate + H(+). The protein operates within cell wall biogenesis; peptidoglycan biosynthesis. Functionally, cell wall formation. This chain is UDP-N-acetylmuramate--L-alanine ligase, found in Shewanella sp. (strain ANA-3).